Here is a 304-residue protein sequence, read N- to C-terminus: Coenzyme PQQ synthesis protein B (304 aa).

Belongs to the PqqB family.

It functions in the pathway cofactor biosynthesis; pyrroloquinoline quinone biosynthesis. Its function is as follows. May be involved in the transport of PQQ or its precursor to the periplasm. The polypeptide is Coenzyme PQQ synthesis protein B (Ectopseudomonas mendocina (strain ymp) (Pseudomonas mendocina)).